The primary structure comprises 21 residues: Serine protease inhibitor 1 (21 aa).

In terms of domain architecture, Pacifastin spans 1-21 (EQQCTPGQTKKEDCNNCTSGD). The tract at residues 1–21 (EQQCTPGQTKKEDCNNCTSGD) is disordered.

It belongs to the protease inhibitor I19 family. In terms of tissue distribution, expressed in hemolymph.

It is found in the secreted. Functionally, probable serine protease inhibitor. In Melanoplus sanguinipes (Migratory grasshopper), this protein is Serine protease inhibitor 1.